An 827-amino-acid polypeptide reads, in one-letter code: MMEGLKKRTRKAFGIRKKEKDTDSTGSPDRDGMQPSPHELPYHSKAECAREGGNKASKKSNGAPNGFYAEIDWERYNSPELDEEGYSIRPEEPGSTKGKHFYSSSESEEEEESHKKFNIKIKPLQSKDILKNAATVDELKASIGNIALSPSPVRKSPRRSPGAIKRNLSSEEVARPRRSTPTPELTSKKPLDDTLALAPLFGPPLESAFDGHKTEVLLDQPEIWGSGQPVNPSMESPKLARPFPTGTPPPLPPKTVPATPPRTGSPLTVATGNDQAATEAKIEKLPSISDLDSIFGPVLSPKSVAVNTEETWVHFSDASPEHVTPELTPREKVVTPPAASDIPADSPTPGPPGPPGSAGPPGPPGPRNVPSPLNLEEVQKKVAEQTFIKDDYLETLSSPKECGLGQRATPPPPPPPTYRTVVSSPGPGSGSGTGTASGASSPARPATPLVPCSCSTPPPPPPRPPSRPKLPPGKPGVGDVSRPFSPPIHSSSPPPIAPLARAESTSSISSTNSLSAATTPTVENEQXSLVWFDRGKFYLTFEGSSRGPSPLTMGAQDTLPVAAAFTETVNAYFKGADPSKCIVKITGEMVLSFPAGITRHFANNPSPAALTFRVINSSRLEHVLPNPQLLCCDNTQNDANTKEFWVNMPNLMTHLKKVSEQKPQATYYNVDMLKYQVSAQGIQSTPLNLAVNWRCEPSSTDLRIDYKYNTDAMSTAVALNNVQFLVPIDGGVTKLQAVLPPAVWNAEQQRILWKIPDISQKSENGGVGSLLARFQLAEGPSKPSPLVVQFTSEGSTLSGCDIELVGAGYGFSLIKKRFAAGKYLADN.

3 disordered regions span residues 1–116 (MMEG…SHKK), 143–199 (IGNI…ALAP), and 223–278 (IWGS…QAAT). Basic and acidic residues-rich tracts occupy residues 16 to 32 (RKKE…DRDG) and 40 to 53 (LPYH…REGG). 8 positions are modified to phosphoserine: S78, S104, S105, S107, S149, S151, S156, and S169. T180 and T182 each carry phosphothreonine. At S236 the chain carries Phosphoserine. The segment covering 245–260 (TGTPPPLPPKTVPATP) has biased composition (pro residues). Residues T247 and T259 each carry the phosphothreonine modification. Phosphoserine is present on residues S265, S287, S289, S300, S316, and S319. Positions 265–276 (SPLTVATGNDQA) are enriched in polar residues. The disordered stretch occupies residues 315–505 (FSDASPEHVT…IAPLARAEST (191 aa)). A compositionally biased stretch (basic and acidic residues) spans 319–333 (SPEHVTPELTPREKV). Residues T324, T328, and T335 each carry the phosphothreonine modification. Positions 335–345 (TPPAASDIPAD) are enriched in low complexity. The span at 346-369 (SPTPGPPGPPGSAGPPGPPGPRNV) shows a compositional bias: pro residues. S371 is modified (phosphoserine). A compositionally biased stretch (basic and acidic residues) spans 377-392 (EVQKKVAEQTFIKDDY). S398 bears the Phosphoserine mark. T409 carries the phosphothreonine modification. The span at 436–455 (ASGASSPARPATPLVPCSCS) shows a compositional bias: low complexity. Residues 456–474 (TPPPPPPRPPSRPKLPPGK) show a composition bias toward pro residues. Positions 481–491 (SRPFSPPIHSS) are enriched in low complexity. Position 485 is a phosphoserine (S485). Residues 558–826 (TLPVAAAFTE…RFAAGKYLAD (269 aa)) form the MHD domain. Interaction with DPF motifs-containing proteins regions lie at residues 560-566 (PVAAAFT), 592-594 (SFP), 666-669 (TYYN), and 812-817 (SLIKKR). The necessary and sufficient to mediate interaction with CANX stretch occupies residues 648-827 (MPNLMTHLKK…FAAGKYLADN (180 aa)).

As to quaternary structure, interacts with proteins essential or regulating the formation of functional clathrin-coated pits. Interacts with CANX. Interacts with AP2A1. Interacts with EPS15. Interacts with SH3GL3. Interacts with AMPH. Interacts with ITSN1 (via SH3 domains). Interacts with and REPS1. Specifically expressed in brain. Also detected at lower levels in spleen and adipose tissue.

The protein localises to the membrane. It is found in the clathrin-coated pit. May function in clathrin-mediated endocytosis. Has both a membrane binding/tubulating activity and the ability to recruit proteins essential to the formation of functional clathrin-coated pits. Has a preference for membranes enriched in phosphatidylserine and phosphoinositides and is required for the endocytosis of the transferrin receptor. May also bind tubulin. May play a role in the regulation of energy homeostasis. This is SH3-containing GRB2-like protein 3-interacting protein 1 (SGIP1) from Psammomys obesus (Fat sand rat).